Consider the following 306-residue polypeptide: UDP-3-O-acyl-N-acetylglucosamine deacetylase (306 aa).

Zn(2+)-binding residues include H79, H239, and D243. Residue H266 is the Proton donor of the active site.

It belongs to the LpxC family. Zn(2+) is required as a cofactor.

The enzyme catalyses a UDP-3-O-[(3R)-3-hydroxyacyl]-N-acetyl-alpha-D-glucosamine + H2O = a UDP-3-O-[(3R)-3-hydroxyacyl]-alpha-D-glucosamine + acetate. Its pathway is glycolipid biosynthesis; lipid IV(A) biosynthesis; lipid IV(A) from (3R)-3-hydroxytetradecanoyl-[acyl-carrier-protein] and UDP-N-acetyl-alpha-D-glucosamine: step 2/6. Catalyzes the hydrolysis of UDP-3-O-myristoyl-N-acetylglucosamine to form UDP-3-O-myristoylglucosamine and acetate, the committed step in lipid A biosynthesis. The polypeptide is UDP-3-O-acyl-N-acetylglucosamine deacetylase (Glaesserella parasuis serovar 5 (strain SH0165) (Haemophilus parasuis)).